The sequence spans 153 residues: Peptide deformylase (153 aa).

Fe cation is bound by residues Cys-87 and His-129. The active site involves Glu-130. Residue His-133 coordinates Fe cation.

Belongs to the polypeptide deformylase family. It depends on Fe(2+) as a cofactor.

It carries out the reaction N-terminal N-formyl-L-methionyl-[peptide] + H2O = N-terminal L-methionyl-[peptide] + formate. Functionally, removes the formyl group from the N-terminal Met of newly synthesized proteins. Requires at least a dipeptide for an efficient rate of reaction. N-terminal L-methionine is a prerequisite for activity but the enzyme has broad specificity at other positions. The chain is Peptide deformylase from Dictyoglomus turgidum (strain DSM 6724 / Z-1310).